Reading from the N-terminus, the 75-residue chain is Putative sulfur carrier protein TsuB (75 aa).

Catalysis depends on C13, which acts as the Cysteine persulfide intermediate.

The protein belongs to the sulfur carrier protein TusA family.

Its function is as follows. Involved in thiosulfate metabolism. The chain is Putative sulfur carrier protein TsuB from Escherichia coli (strain K12).